We begin with the raw amino-acid sequence, 254 residues long: tRNA (guanine-N(1)-)-methyltransferase (254 aa).

Residues glycine 115 and 135-140 (VGDFVL) each bind S-adenosyl-L-methionine.

The protein belongs to the RNA methyltransferase TrmD family. As to quaternary structure, homodimer.

It localises to the cytoplasm. It catalyses the reaction guanosine(37) in tRNA + S-adenosyl-L-methionine = N(1)-methylguanosine(37) in tRNA + S-adenosyl-L-homocysteine + H(+). Specifically methylates guanosine-37 in various tRNAs. This chain is tRNA (guanine-N(1)-)-methyltransferase, found in Francisella tularensis subsp. tularensis (strain FSC 198).